The sequence spans 703 residues: Peptide transporter CstA (703 aa).

16 helical membrane-spanning segments follow: residues 6–26 (TKIL…YLAL), 29–49 (GESV…MIGY), 87–107 (VLFG…GPIL), 118–138 (LWIL…VLFI), 162–182 (VAMV…AMVV), 190–210 (PWGL…GIYM), 221–241 (ASII…VIAA), 256–276 (LAIV…WFLL), 282–302 (LSTF…VLVA), 319–339 (GPVF…CGAI), 374–394 (AVAI…YFAI), 463–483 (LMAF…LTAV), 514–534 (GLLA…QGAI), 547–567 (FGVS…TILV), 574–594 (YTWV…YGGI), and 660–680 (AILC…CIGI).

Belongs to the peptide transporter carbon starvation (CstA) (TC 2.A.114) family.

The protein localises to the cell inner membrane. Involved in the uptake of dipeptides and tripeptides. May influence host-pathogen interactions. Involved in motility and agglutination, and has a role in stimulation of dendritic cells. The chain is Peptide transporter CstA from Campylobacter jejuni subsp. jejuni serotype O:2 (strain ATCC 700819 / NCTC 11168).